The primary structure comprises 185 residues: Small ribosomal subunit protein uS5 (185 aa).

Residues 18-81 enclose the S5 DRBM domain; that stretch reads FVDKLVHINR…ESAKRALIRV (64 aa). The disordered stretch occupies residues 157–185; sequence SPRSVAARRGIKVSQLQSRRRVEDAEATD. Residues 176–185 are compositionally biased toward basic and acidic residues; sequence RRVEDAEATD.

It belongs to the universal ribosomal protein uS5 family. As to quaternary structure, part of the 30S ribosomal subunit. Contacts proteins S4 and S8.

With S4 and S12 plays an important role in translational accuracy. Its function is as follows. Located at the back of the 30S subunit body where it stabilizes the conformation of the head with respect to the body. The polypeptide is Small ribosomal subunit protein uS5 (Xanthobacter autotrophicus (strain ATCC BAA-1158 / Py2)).